A 167-amino-acid chain; its full sequence is SsrA-binding protein (167 aa).

This sequence belongs to the SmpB family.

The protein resides in the cytoplasm. Required for rescue of stalled ribosomes mediated by trans-translation. Binds to transfer-messenger RNA (tmRNA), required for stable association of tmRNA with ribosomes. tmRNA and SmpB together mimic tRNA shape, replacing the anticodon stem-loop with SmpB. tmRNA is encoded by the ssrA gene; the 2 termini fold to resemble tRNA(Ala) and it encodes a 'tag peptide', a short internal open reading frame. During trans-translation Ala-aminoacylated tmRNA acts like a tRNA, entering the A-site of stalled ribosomes, displacing the stalled mRNA. The ribosome then switches to translate the ORF on the tmRNA; the nascent peptide is terminated with the 'tag peptide' encoded by the tmRNA and targeted for degradation. The ribosome is freed to recommence translation, which seems to be the essential function of trans-translation. This Stenotrophomonas maltophilia (strain K279a) protein is SsrA-binding protein.